A 363-amino-acid polypeptide reads, in one-letter code: Spermidine/putrescine import ATP-binding protein PotA (363 aa).

Residues 4–234 form the ABC transporter domain; sequence LELRNVIRRF…PANRFIADFI (231 aa). 36–43 serves as a coordination point for ATP; it reads GPSGCGKT.

Belongs to the ABC transporter superfamily. Spermidine/putrescine importer (TC 3.A.1.11.1) family. The complex is composed of two ATP-binding proteins (PotA), two transmembrane proteins (PotB and PotC) and a solute-binding protein (PotD).

The protein localises to the cell inner membrane. It catalyses the reaction ATP + H2O + polyamine-[polyamine-binding protein]Side 1 = ADP + phosphate + polyamineSide 2 + [polyamine-binding protein]Side 1.. Functionally, part of the ABC transporter complex PotABCD involved in spermidine/putrescine import. Responsible for energy coupling to the transport system. This chain is Spermidine/putrescine import ATP-binding protein PotA, found in Nitrosomonas eutropha (strain DSM 101675 / C91 / Nm57).